Reading from the N-terminus, the 164-residue chain is CB1 cannabinoid receptor-interacting protein 1 (164 aa).

This sequence belongs to the CNRIP family. In terms of assembly, interacts with the cannabinoid receptor CNR1 (via C-terminus). Does not interact with cannabinoid receptor CNR2.

Suppresses cannabinoid receptor CNR1-mediated tonic inhibition of voltage-gated calcium channels. Its function is as follows. Does not suppress cannabinoid receptor CNR1-mediated tonic inhibition of voltage-gated calcium channels. The protein is CB1 cannabinoid receptor-interacting protein 1 (CNRIP1) of Homo sapiens (Human).